A 430-amino-acid chain; its full sequence is Serine--tRNA ligase (430 aa).

237–239 lines the L-serine pocket; that stretch reads TAE. Residue 268-270 participates in ATP binding; sequence RSE. Residue Glu291 coordinates L-serine. 355 to 358 provides a ligand contact to ATP; the sequence is EISS. Ser391 contributes to the L-serine binding site.

It belongs to the class-II aminoacyl-tRNA synthetase family. Type-1 seryl-tRNA synthetase subfamily. As to quaternary structure, homodimer. The tRNA molecule binds across the dimer.

It localises to the cytoplasm. The catalysed reaction is tRNA(Ser) + L-serine + ATP = L-seryl-tRNA(Ser) + AMP + diphosphate + H(+). It catalyses the reaction tRNA(Sec) + L-serine + ATP = L-seryl-tRNA(Sec) + AMP + diphosphate + H(+). The protein operates within aminoacyl-tRNA biosynthesis; selenocysteinyl-tRNA(Sec) biosynthesis; L-seryl-tRNA(Sec) from L-serine and tRNA(Sec): step 1/1. In terms of biological role, catalyzes the attachment of serine to tRNA(Ser). Is also able to aminoacylate tRNA(Sec) with serine, to form the misacylated tRNA L-seryl-tRNA(Sec), which will be further converted into selenocysteinyl-tRNA(Sec). The sequence is that of Serine--tRNA ligase from Yersinia pseudotuberculosis serotype O:1b (strain IP 31758).